Consider the following 437-residue polypeptide: GTPase HflX (437 aa).

The tract at residues 150–173 is disordered; sequence DRQGGGSGGGKGGGGAARGEGEKQ. The segment covering 152-167 has biased composition (gly residues); the sequence is QGGGSGGGKGGGGAAR. The 171-residue stretch at 212–382 folds into the Hflx-type G domain; it reads ATAAIVGYTN…ACVEMLESRV (171 aa). GTP is bound by residues 218 to 225, 243 to 247, 265 to 268, 331 to 334, and 360 to 362; these read GYTNAGKS, FATLD, DTVG, NKVD, and SVK. Mg(2+) is bound by residues S225 and T245.

The protein belongs to the TRAFAC class OBG-HflX-like GTPase superfamily. HflX GTPase family. In terms of assembly, monomer. Associates with the 50S ribosomal subunit. Requires Mg(2+) as cofactor.

The protein resides in the cytoplasm. Functionally, GTPase that associates with the 50S ribosomal subunit and may have a role during protein synthesis or ribosome biogenesis. This chain is GTPase HflX, found in Akkermansia muciniphila (strain ATCC BAA-835 / DSM 22959 / JCM 33894 / BCRC 81048 / CCUG 64013 / CIP 107961 / Muc).